Here is a 400-residue protein sequence, read N- to C-terminus: Aspartate aminotransferase (400 aa).

L-aspartate-binding residues include G42 and N180. K241 is subject to N6-(pyridoxal phosphate)lysine. R373 contacts L-aspartate.

It belongs to the class-I pyridoxal-phosphate-dependent aminotransferase family. Homodimer. Requires pyridoxal 5'-phosphate as cofactor.

It localises to the cytoplasm. It catalyses the reaction L-aspartate + 2-oxoglutarate = oxaloacetate + L-glutamate. This is Aspartate aminotransferase (aspC) from Sulfolobus acidocaldarius (strain ATCC 33909 / DSM 639 / JCM 8929 / NBRC 15157 / NCIMB 11770).